A 229-amino-acid chain; its full sequence is Prolactin (229 aa).

Positions 1-30 (MDSKGSAQKGSRLLLLLVVSNLLLCQGVVS) are cleaved as a signal peptide. Residues Cys-34 and Cys-41 are joined by a disulfide bond. Residue Ser-56 is modified to Phosphoserine. The N-linked (GlcNAc...) asparagine; partial glycan is linked to Asn-61. 2 positions are modified to phosphoserine: Ser-64 and Ser-120. Cystine bridges form between Cys-88–Cys-204 and Cys-221–Cys-229.

The protein belongs to the somatotropin/prolactin family. Interacts with PRLR.

It localises to the secreted. Its function is as follows. Prolactin acts primarily on the mammary gland by promoting lactation, mammogenesis, mitogenesis and osmoregulation. The polypeptide is Prolactin (PRL) (Ovis aries (Sheep)).